Here is a 153-residue protein sequence, read N- to C-terminus: Small ribosomal subunit protein bS16 (153 aa).

The interval 130–153 (EAEAAAAAEEAPAEEAAEEAPAEA) is disordered. Over residues 140–153 (APAEEAAEEAPAEA) the composition is skewed to acidic residues.

Belongs to the bacterial ribosomal protein bS16 family.

This is Small ribosomal subunit protein bS16 from Bifidobacterium longum subsp. infantis (strain ATCC 15697 / DSM 20088 / JCM 1222 / NCTC 11817 / S12).